The primary structure comprises 232 residues: Ion-translocating oxidoreductase complex subunit E (232 aa).

Transmembrane regions (helical) follow at residues 39-59 (LGLG…ISSL), 69-89 (IPIY…LINA), 92-112 (FGLY…CIVV), 125-145 (ALSA…MFVL), and 182-202 (PFLL…MLAV).

It belongs to the NqrDE/RnfAE family. The complex is composed of six subunits: RnfA, RnfB, RnfC, RnfD, RnfE and RnfG.

The protein resides in the cell inner membrane. Its function is as follows. Part of a membrane-bound complex that couples electron transfer with translocation of ions across the membrane. The protein is Ion-translocating oxidoreductase complex subunit E of Klebsiella pneumoniae (strain 342).